A 410-amino-acid chain; its full sequence is Elongation factor Tu, chloroplastic (410 aa).

The tr-type G domain maps to K10–E214. The G1 stretch occupies residues G19–T26. G19–T26 contacts GTP. Residue T26 coordinates Mg(2+). The interval G60–N64 is G2. The tract at residues D81–G84 is G3. Residues D81–H85 and N136–D139 contribute to the GTP site. Residues N136–D139 are G4. Residues S174 to L176 are G5.

The protein belongs to the TRAFAC class translation factor GTPase superfamily. Classic translation factor GTPase family. EF-Tu/EF-1A subfamily.

The protein localises to the plastid. It localises to the chloroplast stroma. The enzyme catalyses GTP + H2O = GDP + phosphate + H(+). Its function is as follows. GTP hydrolase that promotes the GTP-dependent binding of aminoacyl-tRNA to the A-site of ribosomes during protein biosynthesis. The chain is Elongation factor Tu, chloroplastic (tufA) from Bigelowiella natans (Pedinomonas minutissima).